The primary structure comprises 79 residues: RNA-binding protein Hfq (79 aa).

The Sm domain maps to 10–70 (DAFLNHVRKT…ISTIMPAQPI (61 aa)).

The protein belongs to the Hfq family. As to quaternary structure, homohexamer.

RNA chaperone that binds small regulatory RNA (sRNAs) and mRNAs to facilitate mRNA translational regulation in response to envelope stress, environmental stress and changes in metabolite concentrations. Also binds with high specificity to tRNAs. The sequence is that of RNA-binding protein Hfq from Ruegeria pomeroyi (strain ATCC 700808 / DSM 15171 / DSS-3) (Silicibacter pomeroyi).